The following is a 280-amino-acid chain: 4-diphosphocytidyl-2-C-methyl-D-erythritol kinase (280 aa).

Lys-8 is a catalytic residue. 91–101 (PVAAGLAGGSA) contributes to the ATP binding site. Residue Asp-133 is part of the active site.

Belongs to the GHMP kinase family. IspE subfamily.

The enzyme catalyses 4-CDP-2-C-methyl-D-erythritol + ATP = 4-CDP-2-C-methyl-D-erythritol 2-phosphate + ADP + H(+). Its pathway is isoprenoid biosynthesis; isopentenyl diphosphate biosynthesis via DXP pathway; isopentenyl diphosphate from 1-deoxy-D-xylulose 5-phosphate: step 3/6. In terms of biological role, catalyzes the phosphorylation of the position 2 hydroxy group of 4-diphosphocytidyl-2C-methyl-D-erythritol. The polypeptide is 4-diphosphocytidyl-2-C-methyl-D-erythritol kinase (Clostridium acetobutylicum (strain ATCC 824 / DSM 792 / JCM 1419 / IAM 19013 / LMG 5710 / NBRC 13948 / NRRL B-527 / VKM B-1787 / 2291 / W)).